A 154-amino-acid polypeptide reads, in one-letter code: Putative pre-16S rRNA nuclease (154 aa).

This sequence belongs to the YqgF nuclease family.

It is found in the cytoplasm. Its function is as follows. Could be a nuclease involved in processing of the 5'-end of pre-16S rRNA. The protein is Putative pre-16S rRNA nuclease of Rickettsia bellii (strain OSU 85-389).